We begin with the raw amino-acid sequence, 202 residues long: Amelogenin (202 aa).

S16 is subject to Phosphoserine. Residues 77–202 form a disordered region; it reads QPAPPQQPVM…TDKTKREEVD (126 aa). Residues 78–87 are compositionally biased toward pro residues; that stretch reads PAPPQQPVMP. Residues 101–112 are compositionally biased toward low complexity; sequence QPNLPQPGQQPY. The span at 113 to 125 shows a compositional bias: pro residues; that stretch reads QPQPAQQPQPHQP. Residues 126–158 show a composition bias toward low complexity; sequence IQPIQPIQPIQPMQPMQPMQPMQPMQPMQPQTP. The segment covering 164–176 has biased composition (pro residues); the sequence is PLPPQPPLPPMFP.

It belongs to the amelogenin family.

It is found in the secreted. The protein localises to the extracellular space. Its subcellular location is the extracellular matrix. Functionally, plays a role in the biomineralization of teeth. Seems to regulate the formation of crystallites during the secretory stage of tooth enamel development. Thought to play a major role in the structural organization and mineralization of developing enamel. The polypeptide is Amelogenin (AMEL) (Monodelphis domestica (Gray short-tailed opossum)).